We begin with the raw amino-acid sequence, 251 residues long: 5-oxoprolinase subunit A (251 aa).

The protein belongs to the LamB/PxpA family. In terms of assembly, forms a complex composed of PxpA, PxpB and PxpC.

The enzyme catalyses 5-oxo-L-proline + ATP + 2 H2O = L-glutamate + ADP + phosphate + H(+). In terms of biological role, catalyzes the cleavage of 5-oxoproline to form L-glutamate coupled to the hydrolysis of ATP to ADP and inorganic phosphate. This is 5-oxoprolinase subunit A from Vibrio campbellii (strain ATCC BAA-1116).